The chain runs to 1094 residues: AP-3 complex subunit beta-1 (1094 aa).

Over residues 1–11 the composition is skewed to polar residues; that stretch reads MSSNSFPYNEQ. Disordered regions lie at residues 1–31 and 268–292; these read MSSNSFPYNEQSGGGEATELGQEATSTISPS and DNGKNFYESDDDQKEKTDKKKKPYT. Phosphoserine occurs at positions 276 and 609. The disordered stretch occupies residues 662 to 811; it reads PAGKAKQENS…EKKTKQDRTP (150 aa). Basic and acidic residues predominate over residues 666–677; that stretch reads AKQENSAKKFYS. 2 stretches are compositionally biased toward acidic residues: residues 678–696 and 705–726; these read ESEEEEDSSDSSSDSESES and ESGEEGDSNEDSSEDSSSEQDS. Composition is skewed to basic and acidic residues over residues 727-738 and 748-764; these read ESGRESGLENKR and GKSDSEDGEKENEKSKT. 2 positions are modified to phosphoserine: Ser750 and Ser752. Low complexity predominate over residues 765 to 777; sequence SDSSNDESSSIED. Positions 778–791 are enriched in acidic residues; sequence SSSDSESESEPESE. Residues 792–811 show a composition bias toward basic and acidic residues; sequence SESRRVTKEKEKKTKQDRTP.

The protein belongs to the adaptor complexes large subunit family. Adaptor protein complex 3 (AP-3) is a heterotetramer composed of two large adaptins (delta-type subunit AP3D1 and beta-type subunit AP3B1 or AP3B2), a medium adaptin (mu-type subunit AP3M1 or AP3M2) and a small adaptin (sigma-type subunit APS1 or AP3S2). AP-3 associates with the BLOC-1 complex. Interacts with KIF3A; interaction is direct; interaction is impaired by pyrophosphorylation of AP3B1. Phosphorylated on serine residues. Post-translationally, pyrophosphorylation by 5-diphosphoinositol pentakisphosphate (5-IP7) impairs interaction with KIF3A. Serine pyrophosphorylation is achieved by Mg(2+)-dependent, but enzyme independent transfer of a beta-phosphate from a inositol pyrophosphate to a pre-phosphorylated serine residue. Ubiquitously expressed.

It localises to the cytoplasmic vesicle. Its subcellular location is the clathrin-coated vesicle membrane. It is found in the golgi apparatus. In terms of biological role, subunit of non-clathrin- and clathrin-associated adaptor protein complex 3 (AP-3) that plays a role in protein sorting in the late-Golgi/trans-Golgi network (TGN) and/or endosomes. The AP complexes mediate both the recruitment of clathrin to membranes and the recognition of sorting signals within the cytosolic tails of transmembrane cargo molecules. AP-3 appears to be involved in the sorting of a subset of transmembrane proteins targeted to lysosomes and lysosome-related organelles. In concert with the BLOC-1 complex, AP-3 is required to target cargos into vesicles assembled at cell bodies for delivery into neurites and nerve terminals. In Homo sapiens (Human), this protein is AP-3 complex subunit beta-1 (AP3B1).